Consider the following 213-residue polypeptide: rRNA N(6)-adenosine-methyltransferase Mettl5 (213 aa).

Residues glutamine 28, threonine 31, glycine 59, cysteine 62, and 108–109 (DV) each bind S-adenosyl-L-methionine.

The protein belongs to the methyltransferase superfamily. PrmA family. In terms of assembly, heterodimer; heterodimerizes with Trmt112. Enriched in the brain.

Its subcellular location is the cytoplasm. It catalyses the reaction adenosine in rRNA + S-adenosyl-L-methionine = N(6)-methyladenosine in rRNA + S-adenosyl-L-homocysteine + H(+). Catalytic subunit of a heterodimer with Trmt112, which specifically methylates the 6th position of adenine in 18S rRNA. The sequence is that of rRNA N(6)-adenosine-methyltransferase Mettl5 from Drosophila melanogaster (Fruit fly).